The sequence spans 178 residues: Large ribosomal subunit protein uL6 (178 aa).

The protein belongs to the universal ribosomal protein uL6 family. Part of the 50S ribosomal subunit. Interacts weakly with protein L13.

Functionally, this protein binds to the 23S rRNA, and is important in its secondary structure. It is located near the subunit interface in the base of the L7/L12 stalk, and near the tRNA binding site of the peptidyltransferase center. This chain is Large ribosomal subunit protein uL6, found in Haloarcula marismortui (strain ATCC 43049 / DSM 3752 / JCM 8966 / VKM B-1809) (Halobacterium marismortui).